The chain runs to 469 residues: Glutamate--tRNA ligase (469 aa).

A 'HIGH' region motif is present at residues 9–19 (PSPTGFLHVGG). Residues Cys98, Cys100, Cys125, and Asp127 each contribute to the Zn(2+) site. The short motif at 236–240 (KLSKR) is the 'KMSKS' region element. Lys239 lines the ATP pocket.

Belongs to the class-I aminoacyl-tRNA synthetase family. Glutamate--tRNA ligase type 1 subfamily. As to quaternary structure, monomer. Requires Zn(2+) as cofactor.

Its subcellular location is the cytoplasm. The enzyme catalyses tRNA(Glu) + L-glutamate + ATP = L-glutamyl-tRNA(Glu) + AMP + diphosphate. Functionally, catalyzes the attachment of glutamate to tRNA(Glu) in a two-step reaction: glutamate is first activated by ATP to form Glu-AMP and then transferred to the acceptor end of tRNA(Glu). This is Glutamate--tRNA ligase from Shewanella baltica (strain OS185).